We begin with the raw amino-acid sequence, 377 residues long: Chaperone protein DnaJ (377 aa).

The J domain occupies 4–69 (DYYEALGVER…QKRAAYDRFG (66 aa)). The CR-type zinc-finger motif lies at 135–213 (GKTAQIRVPT…CHGQGRVTQE (79 aa)). Residues Cys148, Cys151, Cys165, Cys168, Cys187, Cys190, Cys201, and Cys204 each contribute to the Zn(2+) site. CXXCXGXG motif repeat units lie at residues 148–155 (CDECSGSG), 165–172 (CTMCSGSG), 187–194 (CPTCNGRG), and 201–208 (CGKCHGQG).

This sequence belongs to the DnaJ family. Homodimer. Zn(2+) serves as cofactor.

The protein resides in the cytoplasm. Participates actively in the response to hyperosmotic and heat shock by preventing the aggregation of stress-denatured proteins and by disaggregating proteins, also in an autonomous, DnaK-independent fashion. Unfolded proteins bind initially to DnaJ; upon interaction with the DnaJ-bound protein, DnaK hydrolyzes its bound ATP, resulting in the formation of a stable complex. GrpE releases ADP from DnaK; ATP binding to DnaK triggers the release of the substrate protein, thus completing the reaction cycle. Several rounds of ATP-dependent interactions between DnaJ, DnaK and GrpE are required for fully efficient folding. Also involved, together with DnaK and GrpE, in the DNA replication of plasmids through activation of initiation proteins. This chain is Chaperone protein DnaJ, found in Brucella anthropi (strain ATCC 49188 / DSM 6882 / CCUG 24695 / JCM 21032 / LMG 3331 / NBRC 15819 / NCTC 12168 / Alc 37) (Ochrobactrum anthropi).